Reading from the N-terminus, the 396-residue chain is 1-deoxy-D-xylulose 5-phosphate reductoisomerase (396 aa).

NADPH is bound by residues Thr-13, Gly-14, Ser-15, Ile-16, and Asn-127. Lys-128 lines the 1-deoxy-D-xylulose 5-phosphate pocket. Glu-129 contacts NADPH. Asp-153 contacts Mn(2+). Ser-154, Glu-155, Ser-184, and His-207 together coordinate 1-deoxy-D-xylulose 5-phosphate. Residue Glu-155 coordinates Mn(2+). Gly-213 lines the NADPH pocket. Positions 220, 225, 226, and 229 each coordinate 1-deoxy-D-xylulose 5-phosphate. A Mn(2+)-binding site is contributed by Glu-229.

This sequence belongs to the DXR family. It depends on Mg(2+) as a cofactor. Mn(2+) is required as a cofactor.

It catalyses the reaction 2-C-methyl-D-erythritol 4-phosphate + NADP(+) = 1-deoxy-D-xylulose 5-phosphate + NADPH + H(+). It functions in the pathway isoprenoid biosynthesis; isopentenyl diphosphate biosynthesis via DXP pathway; isopentenyl diphosphate from 1-deoxy-D-xylulose 5-phosphate: step 1/6. Catalyzes the NADPH-dependent rearrangement and reduction of 1-deoxy-D-xylulose-5-phosphate (DXP) to 2-C-methyl-D-erythritol 4-phosphate (MEP). The polypeptide is 1-deoxy-D-xylulose 5-phosphate reductoisomerase (Pseudomonas paraeruginosa (strain DSM 24068 / PA7) (Pseudomonas aeruginosa (strain PA7))).